A 227-amino-acid chain; its full sequence is Charged multivesicular body protein 4b (227 aa).

Disordered regions lie at residues 1 to 26 (MSGILGKLFGAGAGGKGAGKGPSPQE) and 186 to 227 (SGPE…AGNM). The segment covering 9-20 (FGAGAGGKGAGK) has biased composition (gly residues). Residues 25–185 (QEAIQRLRDT…EELDKNLLEI (161 aa)) are a coiled coil.

This sequence belongs to the SNF7 family. As to quaternary structure, probable core component of the endosomal sorting required for transport complex III (ESCRT-III). ESCRT-III components are thought to multimerize to form a flat lattice on the perimeter membrane of the endosome.

It localises to the cytoplasm. It is found in the cytosol. The protein localises to the late endosome membrane. Its subcellular location is the midbody. Functionally, probable core component of the endosomal sorting required for transport complex III (ESCRT-III) which is involved in multivesicular bodies (MVBs) formation and sorting of endosomal cargo proteins into MVBs. MVBs contain intraluminal vesicles (ILVs) that are generated by invagination and scission from the limiting membrane of the endosome and mostly are delivered to lysosomes enabling degradation of membrane proteins, such as stimulated growth factor receptors, lysosomal enzymes and lipids. In Gallus gallus (Chicken), this protein is Charged multivesicular body protein 4b (CHMP4B).